Here is a 284-residue protein sequence, read N- to C-terminus: Bifunctional protein FolD 1 (284 aa).

Residues 166–168 (GAS), serine 191, and isoleucine 232 each bind NADP(+).

Belongs to the tetrahydrofolate dehydrogenase/cyclohydrolase family. Homodimer.

It carries out the reaction (6R)-5,10-methylene-5,6,7,8-tetrahydrofolate + NADP(+) = (6R)-5,10-methenyltetrahydrofolate + NADPH. The enzyme catalyses (6R)-5,10-methenyltetrahydrofolate + H2O = (6R)-10-formyltetrahydrofolate + H(+). It participates in one-carbon metabolism; tetrahydrofolate interconversion. Its function is as follows. Catalyzes the oxidation of 5,10-methylenetetrahydrofolate to 5,10-methenyltetrahydrofolate and then the hydrolysis of 5,10-methenyltetrahydrofolate to 10-formyltetrahydrofolate. In Hydrogenovibrio crunogenus (strain DSM 25203 / XCL-2) (Thiomicrospira crunogena), this protein is Bifunctional protein FolD 1.